Consider the following 451-residue polypeptide: Adenylyltransferase and sulfurtransferase MOCS3 (451 aa).

The disordered stretch occupies residues 42–62 (GEDSDEAEESSNDMPTPQTKL). A compositionally biased stretch (acidic residues) spans 43-52 (EDSDEAEESS). T60 is modified (phosphothreonine). ATP-binding positions include G99, D120, 127–131 (SNLHR), K144, and 188–189 (DN). The Zn(2+) site is built by C229 and C232. C246 (glycyl thioester intermediate; for adenylyltransferase activity) is an active-site residue. Residues C304 and C307 each coordinate Zn(2+). Positions 353-449 (QSQPHLLLDV…WTGSVDATFP (97 aa)) constitute a Rhodanese domain. The Cysteine persulfide intermediate; for sulfurtransferase activity role is filled by C408.

This sequence in the N-terminal section; belongs to the HesA/MoeB/ThiF family. UBA4 subfamily. The cofactor is Zn(2+).

The protein localises to the cytoplasm. Its subcellular location is the cytosol. The catalysed reaction is [molybdopterin-synthase sulfur-carrier protein]-C-terminal Gly-Gly + ATP + H(+) = [molybdopterin-synthase sulfur-carrier protein]-C-terminal Gly-Gly-AMP + diphosphate. It catalyses the reaction [molybdopterin-synthase sulfur-carrier protein]-C-terminal Gly-Gly-AMP + S-sulfanyl-L-cysteinyl-[cysteine desulfurase] + AH2 = [molybdopterin-synthase sulfur-carrier protein]-C-terminal-Gly-aminoethanethioate + L-cysteinyl-[cysteine desulfurase] + A + AMP + 2 H(+). It functions in the pathway tRNA modification; 5-methoxycarbonylmethyl-2-thiouridine-tRNA biosynthesis. It participates in cofactor biosynthesis; molybdopterin biosynthesis. Its function is as follows. Plays a central role in 2-thiolation of mcm(5)S(2)U at tRNA wobble positions of cytosolic tRNA(Lys), tRNA(Glu) and tRNA(Gln). Also essential during biosynthesis of the molybdenum cofactor. Acts by mediating the C-terminal thiocarboxylation of sulfur carriers URM1 and MOCS2A. Its N-terminus first activates URM1 and MOCS2A as acyl-adenylates (-COAMP), then the persulfide sulfur on the catalytic cysteine is transferred to URM1 and MOCS2A to form thiocarboxylation (-COSH) of their C-terminus. The reaction probably involves hydrogen sulfide that is generated from the persulfide intermediate and that acts as a nucleophile towards URM1 and MOCS2A. Subsequently, a transient disulfide bond is formed. Does not use thiosulfate as sulfur donor; NFS1 probably acting as a sulfur donor for thiocarboxylation reactions. The chain is Adenylyltransferase and sulfurtransferase MOCS3 from Drosophila persimilis (Fruit fly).